A 295-amino-acid chain; its full sequence is Glycine--tRNA ligase alpha subunit (295 aa).

The protein belongs to the class-II aminoacyl-tRNA synthetase family. In terms of assembly, tetramer of two alpha and two beta subunits.

The protein resides in the cytoplasm. The enzyme catalyses tRNA(Gly) + glycine + ATP = glycyl-tRNA(Gly) + AMP + diphosphate. In Bacillus subtilis (strain 168), this protein is Glycine--tRNA ligase alpha subunit (glyQ).